The primary structure comprises 432 residues: Probable exopolygalacturonase C (432 aa).

An N-terminal signal peptide occupies residues 1–20 (MPISKGIFLSLLSTLPLALA). N-linked (GlcNAc...) asparagine glycosylation is found at Asn-33, Asn-73, Asn-90, and Asn-140. PbH1 repeat units lie at residues 206–227 (GTNI…AVGS) and 229–250 (SHDI…SIGS). The active-site Proton donor is Asp-220. Residue His-244 is part of the active site. N-linked (GlcNAc...) asparagine glycosylation occurs at Asn-260. The PbH1 3 repeat unit spans residues 261 to 282 (ITNLRFEDVTVIDALYAARFKS). Residues Asn-292 and Asn-302 are each glycosylated (N-linked (GlcNAc...) asparagine). Cys-377 and Cys-383 are disulfide-bonded. Asn-407 carries N-linked (GlcNAc...) asparagine glycosylation.

Belongs to the glycosyl hydrolase 28 family.

It localises to the secreted. It carries out the reaction [(1-&gt;4)-alpha-D-galacturonosyl](n) + H2O = alpha-D-galacturonate + [(1-&gt;4)-alpha-D-galacturonosyl](n-1). Its function is as follows. Specific in hydrolyzing the terminal glycosidic bond of polygalacturonic acid and oligogalacturonates. In Aspergillus terreus (strain NIH 2624 / FGSC A1156), this protein is Probable exopolygalacturonase C (pgxC).